Reading from the N-terminus, the 431-residue chain is Xaa-Arg dipeptidase (431 aa).

This sequence belongs to the peptidase M20A family.

The catalysed reaction is beta-alanyl-L-lysine + H2O = beta-alanine + L-lysine. It carries out the reaction beta-alanyl-L-arginine + H2O = beta-alanine + L-arginine. The enzyme catalyses beta-alanyl-L-ornithine + H2O = beta-alanine + L-ornithine. It catalyses the reaction N(2)-(4-aminobutanoyl)-L-lysine + H2O = 4-aminobutanoate + L-lysine. The catalysed reaction is N(2)-(4-aminobutanoyl)-L-arginine + H2O = 4-aminobutanoate + L-arginine. It carries out the reaction N(2)-(4-aminobutanoyl)-L-ornithine + H2O = 4-aminobutanoate + L-ornithine. Functionally, catalyzes the peptide bond hydrolysis in dipeptides having basic amino acids lysine, ornithine or arginine at C-terminus. Postulated to function in a metabolite repair mechanism by eliminating alternate dipeptide by-products formed during carnosine synthesis. The sequence is that of Xaa-Arg dipeptidase from Mus musculus (Mouse).